Consider the following 340-residue polypeptide: Phosphatidylglycerol--prolipoprotein diacylglyceryl transferase (340 aa).

4 consecutive transmembrane segments (helical) span residues isoleucine 19–glycine 39, alanine 54–isoleucine 74, isoleucine 93–isoleucine 113, and glycine 119–phenylalanine 139. An a 1,2-diacyl-sn-glycero-3-phospho-(1'-sn-glycerol)-binding site is contributed by arginine 141. 3 helical membrane-spanning segments follow: residues histidine 176 to alanine 196, leucine 202 to tryptophan 221, and leucine 238 to serine 258. The interval glutamate 266 to valine 340 is disordered. Residues aspartate 284–threonine 294 are compositionally biased toward basic and acidic residues. The span at aspartate 295–aspartate 307 shows a compositional bias: low complexity. The segment covering proline 326–valine 340 has biased composition (basic and acidic residues).

It belongs to the Lgt family.

It is found in the cell membrane. The catalysed reaction is L-cysteinyl-[prolipoprotein] + a 1,2-diacyl-sn-glycero-3-phospho-(1'-sn-glycerol) = an S-1,2-diacyl-sn-glyceryl-L-cysteinyl-[prolipoprotein] + sn-glycerol 1-phosphate + H(+). The protein operates within protein modification; lipoprotein biosynthesis (diacylglyceryl transfer). In terms of biological role, catalyzes the transfer of the diacylglyceryl group from phosphatidylglycerol to the sulfhydryl group of the N-terminal cysteine of a prolipoprotein, the first step in the formation of mature lipoproteins. This is Phosphatidylglycerol--prolipoprotein diacylglyceryl transferase from Streptomyces avermitilis (strain ATCC 31267 / DSM 46492 / JCM 5070 / NBRC 14893 / NCIMB 12804 / NRRL 8165 / MA-4680).